Here is a 104-residue protein sequence, read N- to C-terminus: Pole-localizer protein TmaR (104 aa).

Coiled coils occupy residues 13-43 (RKNKLKRELLDNEKKVRDNRKRVELLENLLD) and 76-96 (SAEISKARRDISRRIRELTEE).

This sequence belongs to the pole-localizer TmaR family.

The protein resides in the cytoplasm. In terms of biological role, pole-localizer protein involved in the regulation of several cellular processes. The polypeptide is Pole-localizer protein TmaR (Vibrio vulnificus (strain CMCP6)).